The following is a 448-amino-acid chain: MRKTHINVIGAGLAGSEAAYQIAKRGIPVKLYEMRGLKQTPQHKTDKFAELVCSNSLRGAAITNAVGLLKEEMRRLDSVIIKAAEYTQVPAGGALAVDREGFSDFVTKEVSNHPLVEVIREEITEIPQDELTIIATGPLTSDNLANKIREFNGADGFYFYDAAAPIIDANSINFDKVYKKSRYDKGEADYINCPMTKEEFQAFQEALISAEEAPLNSFEDLKVFEGCMPIEEMAKRGYKTMLFGPMKPVGLEYPDEYKGPRDGEFRTPYAVVQLRQDNASASLYNIVGFQTHLKWGEQKRVFQMIPGLENAEFVRYGVMHRNSYMDSPNLLKQTFQSRKQENLFFAGQMTGVEGYVESAASGLVAGINAAKLFNDEEVVIFPKITAIGSLPYYITHTDSKHFQPMNVTFGIVEELDGPRIRDKKERYTKVAERSLNTLTDIISKENLA.

10–15 (GAGLAG) lines the FAD pocket.

Belongs to the MnmG family. TrmFO subfamily. It depends on FAD as a cofactor.

The protein localises to the cytoplasm. The enzyme catalyses uridine(54) in tRNA + (6R)-5,10-methylene-5,6,7,8-tetrahydrofolate + NADH + H(+) = 5-methyluridine(54) in tRNA + (6S)-5,6,7,8-tetrahydrofolate + NAD(+). It catalyses the reaction uridine(54) in tRNA + (6R)-5,10-methylene-5,6,7,8-tetrahydrofolate + NADPH + H(+) = 5-methyluridine(54) in tRNA + (6S)-5,6,7,8-tetrahydrofolate + NADP(+). Its function is as follows. Catalyzes the folate-dependent formation of 5-methyl-uridine at position 54 (M-5-U54) in all tRNAs. The polypeptide is Methylenetetrahydrofolate--tRNA-(uracil-5-)-methyltransferase TrmFO (Lactococcus lactis subsp. cremoris (strain MG1363)).